The primary structure comprises 361 residues: Phospho-N-acetylmuramoyl-pentapeptide-transferase (361 aa).

Transmembrane regions (helical) follow at residues Leu-28–Leu-48, Thr-73–Leu-93, Tyr-97–Tyr-117, Phe-134–Leu-154, Val-168–Ser-188, Gly-200–Ala-220, Ala-237–Phe-257, Val-264–Ile-284, Ile-289–Val-309, and Gln-338–Leu-358.

It belongs to the glycosyltransferase 4 family. MraY subfamily. The cofactor is Mg(2+).

The protein localises to the cell inner membrane. The catalysed reaction is UDP-N-acetyl-alpha-D-muramoyl-L-alanyl-gamma-D-glutamyl-meso-2,6-diaminopimeloyl-D-alanyl-D-alanine + di-trans,octa-cis-undecaprenyl phosphate = di-trans,octa-cis-undecaprenyl diphospho-N-acetyl-alpha-D-muramoyl-L-alanyl-D-glutamyl-meso-2,6-diaminopimeloyl-D-alanyl-D-alanine + UMP. It functions in the pathway cell wall biogenesis; peptidoglycan biosynthesis. Functionally, catalyzes the initial step of the lipid cycle reactions in the biosynthesis of the cell wall peptidoglycan: transfers peptidoglycan precursor phospho-MurNAc-pentapeptide from UDP-MurNAc-pentapeptide onto the lipid carrier undecaprenyl phosphate, yielding undecaprenyl-pyrophosphoryl-MurNAc-pentapeptide, known as lipid I. In Nitrosomonas eutropha (strain DSM 101675 / C91 / Nm57), this protein is Phospho-N-acetylmuramoyl-pentapeptide-transferase.